The following is a 475-amino-acid chain: Glutamate--tRNA ligase 2 (475 aa).

Residues 11-21 (PSPTGFLHIGG) carry the 'HIGH' region motif. Over residues 116 to 133 (AEGRPPRYDGTWRDKDPA) the composition is skewed to basic and acidic residues. The tract at residues 116 to 137 (AEGRPPRYDGTWRDKDPAEAPS) is disordered. Positions 240–244 (KLSKR) match the 'KMSKS' region motif. Residue Lys-243 participates in ATP binding.

Belongs to the class-I aminoacyl-tRNA synthetase family. Glutamate--tRNA ligase type 1 subfamily. In terms of assembly, monomer.

The protein resides in the cytoplasm. The enzyme catalyses tRNA(Glu) + L-glutamate + ATP = L-glutamyl-tRNA(Glu) + AMP + diphosphate. Functionally, catalyzes the attachment of glutamate to tRNA(Glu) in a two-step reaction: glutamate is first activated by ATP to form Glu-AMP and then transferred to the acceptor end of tRNA(Glu). This is Glutamate--tRNA ligase 2 from Chelativorans sp. (strain BNC1).